The primary structure comprises 204 residues: HTH-type transcriptional repressor KstR (204 aa).

The region spanning 18 to 78 (RERRKRILDA…SALGREFERI (61 aa)) is the HTH tetR-type domain. A DNA-binding region (H-T-H motif) is located at residues 41 to 60 (QMRAVAERADVAVGTLYRYF).

In terms of assembly, homodimer.

Functionally, controls the expression of genes used for utilizing diverse lipids as energy sources. This Mycolicibacterium smegmatis (strain ATCC 700084 / mc(2)155) (Mycobacterium smegmatis) protein is HTH-type transcriptional repressor KstR (kstR).